Reading from the N-terminus, the 261-residue chain is Succinate dehydrogenase iron-sulfur subunit (261 aa).

Residues 28–119 (RKVQVYRYDP…DIKIYPLPHM (92 aa)) enclose the 2Fe-2S ferredoxin-type domain. [2Fe-2S] cluster contacts are provided by cysteine 80, cysteine 85, and cysteine 100. One can recognise a 4Fe-4S ferredoxin-type domain in the interval 161-191 (DREKLDGLYECILCACCSTSCPSYWWNSDKY). Residues cysteine 171, cysteine 174, and cysteine 177 each contribute to the [4Fe-4S] cluster site. Residue cysteine 181 participates in [3Fe-4S] cluster binding. Residue tryptophan 186 participates in a ubiquinone binding. [3Fe-4S] cluster is bound by residues cysteine 228 and cysteine 234. Cysteine 238 provides a ligand contact to [4Fe-4S] cluster.

It belongs to the succinate dehydrogenase/fumarate reductase iron-sulfur protein family. Part of an enzyme complex containing four subunits: a flavoprotein, an iron-sulfur, cytochrome b-556, and a hydrophobic anchor protein. Requires [2Fe-2S] cluster as cofactor. The cofactor is [3Fe-4S] cluster. It depends on [4Fe-4S] cluster as a cofactor.

The catalysed reaction is a quinone + succinate = fumarate + a quinol. It participates in carbohydrate metabolism; tricarboxylic acid cycle; fumarate from succinate (bacterial route): step 1/1. This is Succinate dehydrogenase iron-sulfur subunit (sdhB) from Rickettsia typhi (strain ATCC VR-144 / Wilmington).